Here is a 78-residue protein sequence, read N- to C-terminus: MVKLRLKRCGRKQRAVYRIVAIDVRSRREGRDLRNVGFYDPIKNQSYLNVPAILYFLEKGAQPTGTVRDLLKKAEVFK.

This sequence belongs to the bacterial ribosomal protein bS16 family.

It localises to the plastid. Its subcellular location is the chloroplast. In Daucus carota (Wild carrot), this protein is Small ribosomal subunit protein bS16c.